Consider the following 203-residue polypeptide: Small ribosomal subunit protein uS4 (203 aa).

An S4 RNA-binding domain is found at 93–158 (LRLDNVVYRL…QQLVTRFLDL (66 aa)).

It belongs to the universal ribosomal protein uS4 family. Part of the 30S ribosomal subunit. Contacts protein S5. The interaction surface between S4 and S5 is involved in control of translational fidelity.

In terms of biological role, one of the primary rRNA binding proteins, it binds directly to 16S rRNA where it nucleates assembly of the body of the 30S subunit. Functionally, with S5 and S12 plays an important role in translational accuracy. This chain is Small ribosomal subunit protein uS4, found in Akkermansia muciniphila (strain ATCC BAA-835 / DSM 22959 / JCM 33894 / BCRC 81048 / CCUG 64013 / CIP 107961 / Muc).